The chain runs to 620 residues: Glutathione-regulated potassium-efflux system protein KefC (620 aa).

Residues 1–3 (MDS) lie on the Periplasmic side of the membrane. A helical transmembrane segment spans residues 4–24 (HTLLQALIYLGSAALIVPIAV). A topological domain (cytoplasmic) is located at residue R25. The chain crosses the membrane as a helical span at residues 26–46 (LGLGSVLGYLIAGCIIGPWGL). Over 47-53 (RLVTDAE) the chain is Periplasmic. A helical membrane pass occupies residues 54 to 74 (SILHFAEIGVVLMLFVIGLEL). Residues 75–89 (DPQRLWKLRASVFGG) lie on the Cytoplasmic side of the membrane. A helical membrane pass occupies residues 90–110 (GALQMVVCGGLIGLFCMFLGL). Over 111–113 (RWQ) the chain is Periplasmic. A helical membrane pass occupies residues 114-134 (VAELIGMTLALSSTAIAMQAM). The Cytoplasmic segment spans residues 135-148 (NERNLTVSQVGRSA). Residues 149 to 169 (FAVLLFQDIAAIPLVAMIPLL) form a helical membrane-spanning segment. Residues 170 to 177 (AASGASTT) are Periplasmic-facing. A helical transmembrane segment spans residues 178–198 (LGAFALSALKVAGALALVVLL). Topologically, residues 199 to 213 (GRYVTRPALRFVARS) are cytoplasmic. Residues 214-233 (GLREVFSAVALFLVFGFGLL) form a helical membrane-spanning segment. The Periplasmic segment spans residues 234–236 (LEE). Residues 237–254 (VGLSMAMGAFLAGVLLAS) form a helical membrane-spanning segment. Over 255-269 (SEYRHALESDIEPFK) the chain is Cytoplasmic. A helical membrane pass occupies residues 270-290 (GLLLGLFFIGVGMSIDFGTLV). Over 291–293 (ENP) the chain is Periplasmic. Residues 294–314 (LRILLLLAGFLAIKIVMLWLV) traverse the membrane as a helical segment. At 315–326 (ARTLGVPAKQRR) the chain is on the cytoplasmic side. The helical transmembrane segment at 327–347 (WFAVLLGQGSEFAFVVFGAAQ) threads the bilayer. Residues 348 to 358 (MADVLEPEWAK) lie on the Periplasmic side of the membrane. Residues 359–379 (ALTLAVALSMAATPIFLVLLT) traverse the membrane as a helical segment. The Cytoplasmic segment spans residues 380–620 (RMEKTATGEA…ADEPEVKPSI (241 aa)). Residues 399–518 (QPRVIVAGFG…AGVAMPERET (120 aa)) enclose the RCK N-terminal domain. The segment at 599–620 (QGTAEGKHSGKAADEPEVKPSI) is disordered. The segment covering 603 to 620 (EGKHSGKAADEPEVKPSI) has biased composition (basic and acidic residues).

This sequence belongs to the monovalent cation:proton antiporter 2 (CPA2) transporter (TC 2.A.37) family. KefC subfamily. Homodimer. Interacts with the regulatory subunit KefF.

It is found in the cell inner membrane. Pore-forming subunit of a potassium efflux system that confers protection against electrophiles. Catalyzes K(+)/H(+) antiport. The polypeptide is Glutathione-regulated potassium-efflux system protein KefC (Salmonella typhi).